A 727-amino-acid polypeptide reads, in one-letter code: MTVSENSVLETEVLVGGSAMPNERPGAMEPQKLSKMPEGFPRRSTVANGVRSRASRRFLVVGGALLLSLFAIYEMGAVFSIGGITPLEYLVLALFAVNFCWIALAFCSGIAGFLILLRKPRAKDLQVTELHTRTAILMPTYNESPDRVFSAVSVMAETLSQTGHGHAFDWFILSDTTDPDIALLEEQAFLVLRQETHKHSRVYYRRRRKNVARKAGNVADFCRRWGSRYDHLLVLDADSLMESSTITGLAQRMQADPDAGLIQTIPSLINGTTLMARLQQFAARIYGPVIGTGLGWWVQKEGNFWGHNAIIRTEAFMTAAGLPNLKGKPPFGGHIMSHDFVEAALIRRAGWSVVIAYDLPGSYEECPPSIIDLAVRDRRWCQGNLQHSRILPTKGLHWVSRLHLLTGIMAYLSSPFWLMLILTGLMLALQAHFIRPEYFTDQFSLFPTWPIMDSDRALRLFYITMGVLFGPKVFGVLLLLKDGEFARSVGGRIKAIFSVIFEVILSALIAPIMMFIHCGAVMSILMGRDSGWSPQRRDDGSMPWMTLIYRHRWHMLAGVMLGYAAILDSLTLLAWMSPALIGLWIAVPISAWTGSVKIGEVFKRAGILATPEERNPAQICLQAHEARAAYQKHIAEPWTLAQVLKDPALMELHLAMVDKQPLRAAGTPIEAMEAIVHVKVHEARCQQSALAVLNRQEMAMVLANPLMLRSLQKLPEQFVEEDLVSFC.

Positions 18–41 (SAMPNERPGAMEPQKLSKMPEGFP) are disordered. The next 7 helical transmembrane spans lie at 58–78 (FLVVGGALLLSLFAIYEMGAV), 97–117 (VNFCWIALAFCSGIAGFLILL), 278–298 (LQQFAARIYGPVIGTGLGWWV), 408–428 (IMAYLSSPFWLMLILTGLMLA), 460–480 (LFYITMGVLFGPKVFGVLLLL), 496–516 (IFSVIFEVILSALIAPIMMFI), and 572–592 (LLAWMSPALIGLWIAVPISAW).

This sequence belongs to the glycosyltransferase 2 family. OpgH subfamily.

It localises to the cell inner membrane. Its pathway is glycan metabolism; osmoregulated periplasmic glucan (OPG) biosynthesis. Its function is as follows. Involved in the biosynthesis of osmoregulated periplasmic glucans (OPGs). This Shewanella baltica (strain OS155 / ATCC BAA-1091) protein is Glucans biosynthesis glucosyltransferase H.